Here is a 131-residue protein sequence, read N- to C-terminus: Small ribosomal subunit protein uS11 (131 aa).

It belongs to the universal ribosomal protein uS11 family. As to quaternary structure, part of the 30S ribosomal subunit. Interacts with proteins S7 and S18. Binds to IF-3.

Functionally, located on the platform of the 30S subunit, it bridges several disparate RNA helices of the 16S rRNA. Forms part of the Shine-Dalgarno cleft in the 70S ribosome. This is Small ribosomal subunit protein uS11 from Helicobacter pylori (strain P12).